Here is a 353-residue protein sequence, read N- to C-terminus: Putative actin-28 (353 aa).

Belongs to the actin family.

It localises to the cytoplasm. It is found in the cytoskeleton. It carries out the reaction ATP + H2O = ADP + phosphate + H(+). Its function is as follows. Actins are highly conserved proteins that are involved in various types of cell motility and are ubiquitously expressed in all eukaryotic cells. Multiple isoforms are involved in various cellular functions such as cytoskeleton structure, cell mobility, chromosome movement and muscle contraction. This chain is Putative actin-28 (act28), found in Dictyostelium discoideum (Social amoeba).